We begin with the raw amino-acid sequence, 367 residues long: MSLANQVLAVNDDLPIRTHKPVHSGKVRSVYWLTEEDSARLIKEKGYDVAPDAPLAIMVISDRISAFDCIWHGEGGLKGVPGKGAALNAISNHWFKLFKDNGLADSHILDIPHPFVWIVQKAKPVKIEAICRKYITGSMWRAYANGEREFCGIELPEGLEKDKALPELLMTPSTKGILKGIPGVPEADDVNITRQNIVDNFEAFNFSNAKDIAQYEKLLKEGFNVISSALEAIDQTFVDTKFEFGYVHDAAGNEKLIYMDEVGTPDSSRIWDTKEYQAGNIVENSKEGFRQFLLSHFPDPDILLNKERMPEREALARDNELPVESLMDISRTYIGIAEKITGQPIKLSNDPKAEIIEILSKEYGLID.

The protein belongs to the SAICAR synthetase family.

The enzyme catalyses 5-amino-1-(5-phospho-D-ribosyl)imidazole-4-carboxylate + L-aspartate + ATP = (2S)-2-[5-amino-1-(5-phospho-beta-D-ribosyl)imidazole-4-carboxamido]succinate + ADP + phosphate + 2 H(+). It participates in purine metabolism; IMP biosynthesis via de novo pathway; 5-amino-1-(5-phospho-D-ribosyl)imidazole-4-carboxamide from 5-amino-1-(5-phospho-D-ribosyl)imidazole-4-carboxylate: step 1/2. The polypeptide is Phosphoribosylaminoimidazole-succinocarboxamide synthase (Vibrio campbellii (strain ATCC BAA-1116)).